The sequence spans 659 residues: tRNA-guanine(15) transglycosylase (659 aa).

The Nucleophile role is filled by Asp84. Residues Asp119 and Ala190 each contribute to the substrate site. Zn(2+)-binding residues include Cys273, Cys275, and Cys278. Residues 583–658 (KNRVVVNKDS…QAIKTRKGMK (76 aa)) enclose the PUA domain.

The protein belongs to the archaeosine tRNA-ribosyltransferase family. The cofactor is Zn(2+).

It carries out the reaction guanosine(15) in tRNA + 7-cyano-7-deazaguanine = 7-cyano-7-carbaguanosine(15) in tRNA + guanine. The protein operates within tRNA modification; archaeosine-tRNA biosynthesis. Exchanges the guanine residue with 7-cyano-7-deazaguanine (preQ0) at position 15 in the dihydrouridine loop (D-loop) of archaeal tRNAs. The sequence is that of tRNA-guanine(15) transglycosylase from Methanobrevibacter smithii (strain ATCC 35061 / DSM 861 / OCM 144 / PS).